The primary structure comprises 156 residues: Transcriptional repressor NrdR (156 aa).

A zinc finger lies at 3–34 (CPSCQFNGTRVVDSRPVDDNKEIRRRRECESC). Positions 49–139 (LVVVKKEGSR…VYRQFKDINV (91 aa)) constitute an ATP-cone domain.

Belongs to the NrdR family. The cofactor is Zn(2+).

Its function is as follows. Negatively regulates transcription of bacterial ribonucleotide reductase nrd genes and operons by binding to NrdR-boxes. In Lysinibacillus sphaericus (strain C3-41), this protein is Transcriptional repressor NrdR.